The sequence spans 79 residues: Protein RALF-like 15 (79 aa).

A signal peptide spans 1–28 (MGMSKSIKVIVSLALILFLALAATKVEA). Intrachain disulfides connect cysteine 46/cysteine 54 and cysteine 66/cysteine 72.

Belongs to the plant rapid alkalinization factor (RALF) family.

The protein resides in the secreted. In terms of biological role, cell signaling peptide that may regulate plant stress, growth, and development. Mediates a rapid alkalinization of extracellular space by mediating a transient increase in the cytoplasmic Ca(2+) concentration leading to a calcium-dependent signaling events through a cell surface receptor and a concomitant activation of some intracellular mitogen-activated protein kinases. The sequence is that of Protein RALF-like 15 (RALFL15) from Arabidopsis thaliana (Mouse-ear cress).